The chain runs to 753 residues: Bile salt-activated lipase (753 aa).

Positions 1 to 20 (MGRLQLVVLGLTCCWAVASA) are cleaved as a signal peptide. The tract at residues 21–121 (AKLGAVYTEG…KQVSRDLPVM (101 aa)) is heparin-binding. A disulfide bridge connects residues C84 and C100. Residue N207 is glycosylated (N-linked (GlcNAc...) (complex) asparagine). Residue S214 is the Acyl-ester intermediate of the active site. Cysteines 266 and 277 form a disulfide. Residues D340 and H455 each act as charge relay system in the active site. A disordered region spans residues 555-753 (QEATPVPPTG…EAQMPAVIRF (199 aa)). O-linked (GalNAc...) threonine glycosylation is found at T558, T569, and T579. 17 repeat units span residues 559-569 (PVPPTGDSEAT), 570-580 (PVPPTGDSETA), 581-591 (PVPPTGDSGAP), 592-602 (PVPPTGDSGAP), 603-613 (PVPPTGDSGAP), 614-624 (PVPPTGDSGAP), 625-635 (PVPPTGDSGAP), 636-646 (PVPPTGDSGAP), 647-657 (PVPPTGDSGAP), 658-668 (PVPPTGDSGAP), 669-679 (PVPPTGDAGPP), 680-690 (PVPPTGDSGAP), 691-701 (PVPPTGDSGAP), 702-712 (PVTPTGDSETA), 713-723 (PVPPTGDSGAP), 724-734 (PVPPTGDSEAA), and 735-745 (PVPPTDDSKEA). Positions 559–745 (PVPPTGDSEA…VPPTDDSKEA (187 aa)) are 17 X 11 AA tandem repeats, glycodomain, O-linked (mucin type). Residues T607, T618, T629, T640, T651, T662, and T673 are each glycosylated (O-linked (GalNAc...) threonine). A compositionally biased stretch (pro residues) spans 668–683 (PPVPPTGDAGPPPVPP).

It belongs to the type-B carboxylesterase/lipase family. As to quaternary structure, interacts with CLC. Post-translationally, N- and O-glycosylated. As to expression, mammary gland and pancreas. Detected in pancreatic and duodenal juice (at protein level). Expressed by eosinophils.

It localises to the secreted. It catalyses the reaction a triacylglycerol + H2O = a diacylglycerol + a fatty acid + H(+). The catalysed reaction is 1,2,3-tri-(9Z-octadecenoyl)-glycerol + H2O = di-(9Z)-octadecenoylglycerol + (9Z)-octadecenoate + H(+). The enzyme catalyses 1,2,3-trioctanoylglycerol + H2O = dioctanoylglycerol + octanoate + H(+). It carries out the reaction a sterol ester + H2O = a sterol + a fatty acid + H(+). It catalyses the reaction cholesteryl (9Z-octadecenoate) + H2O = cholesterol + (9Z)-octadecenoate + H(+). The catalysed reaction is an acetyl ester + H2O = an aliphatic alcohol + acetate + H(+). The enzyme catalyses a butanoate ester + H2O = an aliphatic alcohol + butanoate + H(+). It carries out the reaction 9-hexadecanoyloxy-octadecanoate + H2O = 9-hydroxy-octadecanoate + hexadecanoate + H(+). It catalyses the reaction 9-(9Z-octadecenoyloxy)-octadecanoate + H2O = 9-hydroxy-octadecanoate + (9Z)-octadecenoate + H(+). The catalysed reaction is 1-hexadecanoyl-sn-glycero-3-phosphocholine + H2O = sn-glycerol 3-phosphocholine + hexadecanoate + H(+). The enzyme catalyses 12-hexadecanoyloxy-octadecanoate + H2O = 12-hydroxyoctadecanoate + hexadecanoate + H(+). It carries out the reaction 12-(9Z-octadecenoyloxy)-octadecanoate + H2O = 12-hydroxyoctadecanoate + (9Z)-octadecenoate + H(+). It catalyses the reaction 13-(9Z-octadecenoyloxy)-octadecanoate + H2O = 13-hydroxy-octadecanoate + (9Z)-octadecenoate + H(+). The catalysed reaction is 9-(9Z-hexadecenoyloxy)-octadecanoate + H2O = (9Z)-hexadecenoate + 9-hydroxy-octadecanoate + H(+). The enzyme catalyses 12-(9Z-hexadecenoyloxy)-octadecanoate + H2O = 12-hydroxyoctadecanoate + (9Z)-hexadecenoate + H(+). It carries out the reaction 13-(9Z-hexadecenoyloxy)-octadecanoate + H2O = 13-hydroxy-octadecanoate + (9Z)-hexadecenoate + H(+). It catalyses the reaction 12-octadecanoyloxy-octadecanoate + H2O = 12-hydroxyoctadecanoate + octadecanoate + H(+). The catalysed reaction is 13-octadecanoyloxy-octadecanoate + H2O = 13-hydroxy-octadecanoate + octadecanoate + H(+). The enzyme catalyses 5-(9Z-hexadecenoyloxy)-octadecanoate + H2O = 5-hydroxy-octadecanoate + (9Z)-hexadecenoate + H(+). It carries out the reaction 9-octadecanoyloxy-octadecanoate + H2O = 9-hydroxy-octadecanoate + octadecanoate + H(+). Activated by bile salts such as sodium taurocholate. Functionally, catalyzes the hydrolysis of a wide range of substrates including cholesteryl esters, phospholipids, lysophospholipids, di- and tri-acylglycerols, and fatty acid esters of hydroxy fatty acids (FAHFAs). Preferentially hydrolyzes FAHFAs with the ester bond further away from the carboxylate. Unsaturated FAHFAs are hydrolyzed more quickly than saturated FAHFAs. Has an essential role in the complete digestion of dietary lipids and their intestinal absorption, along with the absorption of fat-soluble vitamins. This Homo sapiens (Human) protein is Bile salt-activated lipase (CEL).